The sequence spans 174 residues: Eukaryotic translation elongation factor 1 epsilon-1 (174 aa).

Residue Ala-2 is modified to N-acetylalanine. The N-terminal stretch occupies residues 2–56 (AAAAELKLLEKSLGLRPGNKYSAQGERQIPVLQTNNGPSLTGLATIATHLVKQAS). The 124-residue stretch at 50 to 173 (HLVKQASKEH…FIKNRLYANS (124 aa)) folds into the GST C-terminal domain. The tract at residues 57-63 (KEHLLGS) is linker. The tract at residues 64 to 152 (TAEEKALVQQ…SRWFCHIQHY (89 aa)) is C-terminal. Lys-138 carries the N6-acetyllysine modification. Positions 153–169 (PDIRQHLSSVVFIKNRL) form a coiled coil.

As to quaternary structure, part of a multisubunit complex that groups tRNA ligases for Arg (RARS1), Asp (DARS1), Gln (QARS1), Ile (IARS1), Leu (LARS1), Lys (KARS1), Met (MARS1) the bifunctional ligase for Glu and Pro (EPRS1) and the auxiliary subunits AIMP1/p43, AIMP2/p38 and EEF1E1/p18. Can interact simultaneously with MARS1 and EPRS1. Forms a linear complex that contains MARS1, EEF1E1, EPRS1 and AIMP2 that is at the core of the multisubunit complex. Interacts with ATM and ATR. The interaction with ATM, which takes place independently of TP53, is induced by DNA damage that may occur during genotoxic stress or cell growth. The interaction with ATR is enhanced by UV irradiation.

The protein resides in the cytoplasm. Its subcellular location is the nucleus. In terms of biological role, positive modulator of ATM response to DNA damage. The polypeptide is Eukaryotic translation elongation factor 1 epsilon-1 (EEF1E1) (Cricetulus griseus (Chinese hamster)).